We begin with the raw amino-acid sequence, 435 residues long: MASSVLSECGFRPLPRFYPKHTTSFASNPKPTFKFNPPLKPPSSLLNSRYGFYSKTRNWALNVATPLTTLQSPSEEDTERFDPGAPPPFNLADIRAAIPKHCWVKNPWMSMSYVVRDVAIVFGLAAVAAYFNNWLLWPLYWFAQGTMFWALFVLGHDCGHGSFSNDPRLNSVAGHLLHSSILVPYHGWRISHRTHHQNHGHVENDESWHPLPESIYKNLEKTTQMFRFTLPFPMLAYPFYLWNRSPGKQGSHYHPDSDLFLPKEKKDVLTSTACWTAMAALLVCLNFVMGPIQMLKLYGIPYWIFVMWLDFVTYLHHHGHEDKLPWYRGKEWSYLRGGLTTLDRDYGWINNIHHDIGTHVIHHLFPQIPHYHLVEATEAAKPVLGKYYREPKNSGPLPLHLLGSLIKSMKQDHFVSDTGDVVYYEADPKLNGQRT.

The N-terminal 42 residues, 1–42, are a transit peptide targeting the chloroplast; the sequence is MASSVLSECGFRPLPRFYPKHTTSFASNPKPTFKFNPPLKPP. 2 consecutive transmembrane segments (helical) span residues 111–131 and 134–154; these read MSYV…AAYF and WLLW…LFVL. The short motif at 156 to 160 is the Histidine box-1 element; it reads HDCGH. Residues 192-196 carry the Histidine box-2 motif; that stretch reads HRTHH. 2 helical membrane passes run 268-290 and 297-319; these read VLTS…FVMG and LYGI…HHHG. The short motif at 359–363 is the Histidine box-3 element; it reads HVIHH.

The protein belongs to the fatty acid desaturase type 1 family.

Its subcellular location is the plastid. It is found in the chloroplast membrane. The enzyme catalyses a (7Z,10Z)-hexadecadienoyl-containing glycerolipid + 2 reduced [2Fe-2S]-[ferredoxin] + O2 + 2 H(+) = a (7Z,10Z,13Z)-hexadecatrienoyl-containing glycerolipid + 2 oxidized [2Fe-2S]-[ferredoxin] + 2 H2O. It catalyses the reaction a (9Z,12Z)-octadecadienoyl-containing glycerolipid + 2 reduced [2Fe-2S]-[ferredoxin] + O2 + 2 H(+) = (9Z,12Z,15Z)-octadecatrienoyl-containing glycerolipid + 2 oxidized [2Fe-2S]-[ferredoxin] + 2 H2O. It functions in the pathway lipid metabolism; polyunsaturated fatty acid biosynthesis. Its function is as follows. Chloroplast omega-3 fatty acid desaturase introduces the third double bond in the biosynthesis of 16:3 and 18:3 fatty acids, important constituents of plant membranes. It is thought to use ferredoxin as an electron donor and to act on fatty acids esterified to galactolipids, sulfolipids and phosphatidylglycerol. The protein is Temperature-sensitive sn-2 acyl-lipid omega-3 desaturase (ferredoxin), chloroplastic of Arabidopsis thaliana (Mouse-ear cress).